The primary structure comprises 441 residues: Nuclear distribution protein nudF (441 aa).

The region spanning 9–41 (QAEELHKSIIAYLASVNLTESSAALRAELGDSV) is the LisH domain. 8 WD repeats span residues 87–128 (GHRE…RTVK), 130–170 (HTKA…KNIR), 174–221 (GHDH…CVKT), 224–263 (GHVD…TKST), 266–326 (GHEH…IKTL), 328–367 (GHDN…KCVR), 372–402 (AHGH…NGAP), and 403–440 (AATA…RIFA). The interval 390 to 415 (GGANGESETNGAPAATATTNGVRPDP) is disordered. Positions 398 to 410 (TNGAPAATATTNG) are enriched in low complexity.

The protein belongs to the WD repeat LIS1/nudF family. As to quaternary structure, self-associates. Interacts with nudE and dynein.

It is found in the cytoplasm. Its subcellular location is the cytoskeleton. The protein localises to the spindle pole. Functionally, positively regulates the activity of the minus-end directed microtubule motor protein dynein. May enhance dynein-mediated microtubule sliding by targeting dynein to the microtubule plus end. Required for nuclear migration during vegetative growth as well as development. Required for retrograde early endosome (EE) transport from the hyphal tip. Required for localization of dynein to the mitotic spindle poles. Recruits additional proteins to the dynein complex at SPBs. The chain is Nuclear distribution protein nudF from Neosartorya fischeri (strain ATCC 1020 / DSM 3700 / CBS 544.65 / FGSC A1164 / JCM 1740 / NRRL 181 / WB 181) (Aspergillus fischerianus).